A 205-amino-acid polypeptide reads, in one-letter code: High frequency lysogenization protein HflD homolog (205 aa).

It belongs to the HflD family.

It localises to the cytoplasm. The protein localises to the cell inner membrane. The polypeptide is High frequency lysogenization protein HflD homolog (Shewanella oneidensis (strain ATCC 700550 / JCM 31522 / CIP 106686 / LMG 19005 / NCIMB 14063 / MR-1)).